The chain runs to 145 residues: Small ribosomal subunit protein eS19 (145 aa).

It belongs to the eukaryotic ribosomal protein eS19 family. Component of the small ribosomal subunit.

The protein resides in the cytoplasm. Its subcellular location is the nucleus. In terms of biological role, component of the small ribosomal subunit. The ribosome is a large ribonucleoprotein complex responsible for the synthesis of proteins in the cell. Required for pre-rRNA processing and maturation of 40S ribosomal subunits. The polypeptide is Small ribosomal subunit protein eS19 (rps19) (Myxine glutinosa (Atlantic hagfish)).